We begin with the raw amino-acid sequence, 457 residues long: GTPase Era, mitochondrial (457 aa).

Residues 1–18 (MAFRVSISTFGKSLRVRR) constitute a mitochondrion transit peptide. The Era-type G domain occupies 107–350 (KVLRVAIIGA…RYLVVGAKPG (244 aa)). The segment at 115-122 (GAPNAGKS) is G1. 115–122 (GAPNAGKS) provides a ligand contact to GTP. The G2 stretch occupies residues 141 to 145 (HTTRA). A G3 region spans residues 162–165 (DTPG). GTP-binding positions include 162 to 166 (DTPGL) and 231 to 234 (NKVD). Residues 231–234 (NKVD) are G4. The span at 270 to 290 (AERRTDREARTSGSGDEEKPG) shows a compositional bias: basic and acidic residues. Residues 270–300 (AERRTDREARTSGSGDEEKPGGDVADGEGSE) are disordered. Residues 328–330 (VSA) are G5. One can recognise a KH type-2 domain in the interval 376–457 (LLEYLPKEVP…KLRLSVKVKN (82 aa)).

Belongs to the TRAFAC class TrmE-Era-EngA-EngB-Septin-like GTPase superfamily. Era GTPase family.

The protein localises to the mitochondrion matrix. The protein resides in the mitochondrion inner membrane. Probable GTPase that plays a role in the mitochondrial ribosomal small subunit assembly. Specifically binds the 12S mitochondrial rRNA (12S mt-rRNA) to a 33 nucleotide section delineating the 3' terminal stem-loop region. May act as a chaperone that protects the 12S mt-rRNA on the 28S mitoribosomal subunit during ribosomal small subunit assembly. The chain is GTPase Era, mitochondrial (eral1) from Salmo salar (Atlantic salmon).